The chain runs to 247 residues: Granzyme B (247 aa).

An N-terminal signal peptide occupies residues 1–18; the sequence is MQPILLLLAFLLLPRADA. Positions 19–20 are cleaved as a propeptide — activation peptide; sequence GE. The Peptidase S1 domain maps to 21–245; that stretch reads IIGGHEAKPH…FVHWIKKTMK (225 aa). Cysteines 49 and 65 form a disulfide. His64 serves as the catalytic Charge relay system. Residues Asn71 and Asn104 are each glycosylated (N-linked (GlcNAc...) asparagine). Asp108 acts as the Charge relay system in catalysis. Cystine bridges form between Cys142–Cys209 and Cys173–Cys188. The active-site Charge relay system is Ser203.

Belongs to the peptidase S1 family. Granzyme subfamily.

The protein resides in the secreted. The protein localises to the cytolytic granule. The enzyme catalyses Preferential cleavage: -Asp-|-Xaa- &gt;&gt; -Asn-|-Xaa- &gt; -Met-|-Xaa-, -Ser-|-Xaa-.. Inactivated by the serine protease inhibitor diisopropylfluorophosphate. Abundant protease in the cytosolic granules of cytotoxic T-cells and NK-cells which activates caspase-independent pyroptosis when delivered into the target cell through the immunological synapse. It cleaves after Asp. Once delivered into the target cell, acts by catalyzing cleavage of gasdermin-E (GSDME), releasing the pore-forming moiety of GSDME, thereby triggering pyroptosis and target cell death. Seems to be linked to an activation cascade of caspases (aspartate-specific cysteine proteases) responsible for apoptosis execution. Cleaves caspase-3, -9 and -10 (CASP3, CASP9 and CASP10, respectively) to give rise to active enzymes mediating apoptosis. Cleaves and activates CASP7 in response to bacterial infection, promoting plasma membrane repair. The polypeptide is Granzyme B (Homo sapiens (Human)).